We begin with the raw amino-acid sequence, 66 residues long: Cytochrome c oxidase subunit 26, mitochondrial (66 aa).

The transit peptide at 1 to 8 (MFFSQVLR) directs the protein to the mitochondrion. The Mitochondrial matrix segment spans residues 9–27 (SSARAAPIKRYTGGRIGES). A helical transmembrane segment spans residues 28–64 (WVITEGRRLIPEIFQWSAVLSVCLGWPGAVYFFSKAR). Topologically, residues 65-66 (KA) are mitochondrial intermembrane.

The protein belongs to the fungal cytochrome c oxidase subunit 26 family. Component of the cytochrome c oxidase (complex IV, CIV), a multisubunit enzyme composed of 12 subunits. The complex is composed of a catalytic core of 3 subunits COX1, COX2 and COX3, encoded in the mitochondrial DNA, and 9 supernumerary subunits COX4, COX5A (or COX5B), COX6, COX7, COX8, COX9, COX12, COX13 and COX26, which are encoded in the nuclear genome. The complex exists as a monomer or a dimer and forms supercomplexes (SCs) in the inner mitochondrial membrane with a dimer of ubiquinol-cytochrome c oxidoreductase (cytochrome b-c1 complex, complex III, CIII), resulting in 2 different assemblies (supercomplexes III(2)IV and III(2)IV(2)).

It localises to the mitochondrion inner membrane. Its function is as follows. Component of the cytochrome c oxidase, the last enzyme in the mitochondrial electron transport chain which drives oxidative phosphorylation. The respiratory chain contains 3 multisubunit complexes succinate dehydrogenase (complex II, CII), ubiquinol-cytochrome c oxidoreductase (cytochrome b-c1 complex, complex III, CIII) and cytochrome c oxidase (complex IV, CIV), that cooperate to transfer electrons derived from NADH and succinate to molecular oxygen, creating an electrochemical gradient over the inner membrane that drives transmembrane transport and the ATP synthase. Cytochrome c oxidase is the component of the respiratory chain that catalyzes the reduction of oxygen to water. Electrons originating from reduced cytochrome c in the intermembrane space (IMS) are transferred via the dinuclear copper A center (CU(A)) of COX2 and heme A of COX1 to the active site in COX1, a binuclear center (BNC) formed by heme A3 and copper B (CU(B)). The BNC reduces molecular oxygen to 2 water molecules using 4 electrons from cytochrome c in the IMS and 4 protons from the mitochondrial matrix. The polypeptide is Cytochrome c oxidase subunit 26, mitochondrial (COX26) (Saccharomyces cerevisiae (strain ATCC 204508 / S288c) (Baker's yeast)).